A 329-amino-acid polypeptide reads, in one-letter code: Terpene synthase 7 (329 aa).

The DDxx(x)D/E motif signature appears at 99–104 (DDLYLE). An NDxxSxxxD/E motif motif is present at residues 230–238 (NDIHSFNKE).

The protein belongs to the terpene synthase family.

Terpene synthase that converts its substrate farnesyl diphosphate (FPP) into 6 yet unidentified sesquiterpenes. This Dictyostelium purpureum (Slime mold) protein is Terpene synthase 7.